The primary structure comprises 501 residues: MDYDFKAKLAAERERVEDLFEYEGCKVGRGTYGHVYKARRKDGKDEKEYALKQIEGTGISMSACREIALLRELKHPNVIALQKVFLSHSDRKVWLLFDYAEHDLWHIIKFHRASKANKKPMQLPRSMVKSLLYQILDGIHYLHANWVLHRDLKPANILVMGEGPERGRVKIADMGFARLFNSPLKPLADLDPVVVTFWYRAPELLLGARHYTKAIDIWAIGCIFAELLTSEPIFHCRQEDIKTSNPFHHDQLDRIFSVMGFPADKDWEDIRKMPEYPTLQKDFRRTTYANSSLIKYMEKHKVKPDSKVFLLLQKLLTMDPTKRITSEQALQDPYFQEDPLPTLDVFAGCQIPYPKREFLNEDEPEEKGDKNQPQQQNPHQQPAAPAQQTAAPPQAPPPQQSSAQTNGTAGGATAGGGGAGAGLQHSQDPGLNQVPPNKKPRIGPSGANSGGPVMPSDYQHSSSRLNYQSSVQGSSQSQSTLGYSSSQQSTQYHSSHQTHRY.

Met-1 carries the post-translational modification N-acetylmethionine. In terms of domain architecture, Protein kinase spans Glu-21 to Phe-335. ATP contacts are provided by residues Val-27 to Val-35 and Lys-52. Asp-151 (proton acceptor) is an active-site residue. Residues Asp-362 to Tyr-501 are disordered. Residues Asn-371–Pro-392 show a composition bias toward low complexity. Residues Thr-408–Ala-421 show a composition bias toward gly residues. Ser-449 carries the phosphoserine modification. Residues Tyr-467–Ser-495 are compositionally biased toward low complexity.

This sequence belongs to the protein kinase superfamily. CMGC Ser/Thr protein kinase family. CDC2/CDKX subfamily.

The protein resides in the cytoplasm. Its subcellular location is the perinuclear region. It localises to the nucleus. It carries out the reaction L-seryl-[protein] + ATP = O-phospho-L-seryl-[protein] + ADP + H(+). The catalysed reaction is L-threonyl-[protein] + ATP = O-phospho-L-threonyl-[protein] + ADP + H(+). The protein is Cyclin-dependent kinase 19 (Cdk19) of Mus musculus (Mouse).